Consider the following 212-residue polypeptide: MNSIAVVDYGMGNLRSVSKALEYVDSSAVVTVTSDPETIRSAARVVVPGQGAMPHCMQALDDQGLRESVIEAAKNKPFLGICLGLQMLFEESEEGNIRALGILPGRVKKLESTDTADSDIPKIKIPHMGWNQVHQTLEHPLWHGIDTDTRFYFVHSYYVATDEPQIVAGSTEYPVPFTCAVARDNIFAIQFHPEKSHSAGLALLSNFLKWTP.

Residues 3–212 form the Glutamine amidotransferase type-1 domain; sequence SIAVVDYGMG…LLSNFLKWTP (210 aa). Cys82 functions as the Nucleophile in the catalytic mechanism. Active-site residues include His192 and Glu194.

As to quaternary structure, heterodimer of HisH and HisF.

The protein resides in the cytoplasm. The enzyme catalyses 5-[(5-phospho-1-deoxy-D-ribulos-1-ylimino)methylamino]-1-(5-phospho-beta-D-ribosyl)imidazole-4-carboxamide + L-glutamine = D-erythro-1-(imidazol-4-yl)glycerol 3-phosphate + 5-amino-1-(5-phospho-beta-D-ribosyl)imidazole-4-carboxamide + L-glutamate + H(+). It carries out the reaction L-glutamine + H2O = L-glutamate + NH4(+). The protein operates within amino-acid biosynthesis; L-histidine biosynthesis; L-histidine from 5-phospho-alpha-D-ribose 1-diphosphate: step 5/9. In terms of biological role, IGPS catalyzes the conversion of PRFAR and glutamine to IGP, AICAR and glutamate. The HisH subunit catalyzes the hydrolysis of glutamine to glutamate and ammonia as part of the synthesis of IGP and AICAR. The resulting ammonia molecule is channeled to the active site of HisF. In Nitrosomonas europaea (strain ATCC 19718 / CIP 103999 / KCTC 2705 / NBRC 14298), this protein is Imidazole glycerol phosphate synthase subunit HisH.